The sequence spans 709 residues: Polyribonucleotide nucleotidyltransferase (709 aa).

2 residues coordinate Mg(2+): Asp-486 and Asp-492. Positions 553–612 (PRIHTIKINADKIKDVIGKGGSVIRALTEETGTTIEIEDDGTVKIAATSGEQAKQAIARI) constitute a KH domain. The region spanning 622–690 (GRIYNGKVTR…RQGRIRLSMK (69 aa)) is the S1 motif domain. Residues 690–709 (KEAQATQQEAAETSSEDPAN) form a disordered region. Low complexity predominate over residues 691–702 (EAQATQQEAAET).

This sequence belongs to the polyribonucleotide nucleotidyltransferase family. Component of the RNA degradosome, which is a multiprotein complex involved in RNA processing and mRNA degradation. The cofactor is Mg(2+).

The protein resides in the cytoplasm. It catalyses the reaction RNA(n+1) + phosphate = RNA(n) + a ribonucleoside 5'-diphosphate. In terms of biological role, involved in mRNA degradation. Catalyzes the phosphorolysis of single-stranded polyribonucleotides processively in the 3'- to 5'-direction. The polypeptide is Polyribonucleotide nucleotidyltransferase (Proteus mirabilis (strain HI4320)).